A 208-amino-acid polypeptide reads, in one-letter code: N-(5'-phosphoribosyl)anthranilate isomerase (208 aa).

It belongs to the TrpF family.

It catalyses the reaction N-(5-phospho-beta-D-ribosyl)anthranilate = 1-(2-carboxyphenylamino)-1-deoxy-D-ribulose 5-phosphate. It participates in amino-acid biosynthesis; L-tryptophan biosynthesis; L-tryptophan from chorismate: step 3/5. In Dechloromonas aromatica (strain RCB), this protein is N-(5'-phosphoribosyl)anthranilate isomerase.